A 238-amino-acid polypeptide reads, in one-letter code: Ribonuclease PH (238 aa).

The tract at residues 67-87 (PRSTHTRSDREAARGKQSGRT) is disordered. Residues R86 and 124–126 (GTR) contribute to the phosphate site.

Belongs to the RNase PH family. In terms of assembly, homohexameric ring arranged as a trimer of dimers.

It catalyses the reaction tRNA(n+1) + phosphate = tRNA(n) + a ribonucleoside 5'-diphosphate. Functionally, phosphorolytic 3'-5' exoribonuclease that plays an important role in tRNA 3'-end maturation. Removes nucleotide residues following the 3'-CCA terminus of tRNAs; can also add nucleotides to the ends of RNA molecules by using nucleoside diphosphates as substrates, but this may not be physiologically important. Probably plays a role in initiation of 16S rRNA degradation (leading to ribosome degradation) during starvation. This is Ribonuclease PH from Ralstonia nicotianae (strain ATCC BAA-1114 / GMI1000) (Ralstonia solanacearum).